We begin with the raw amino-acid sequence, 660 residues long: DNA ligase (660 aa).

NAD(+) is bound by residues 33–37 (DFVYD), 82–83 (SL), and glutamate 110. Lysine 112 serves as the catalytic N6-AMP-lysine intermediate. NAD(+)-binding residues include arginine 133, glutamate 167, lysine 281, and lysine 305. The Zn(2+) site is built by cysteine 396, cysteine 399, cysteine 412, and cysteine 417. Residues 583 to 660 (GENKLLAGKK…SFEDIKSYLD (78 aa)) enclose the BRCT domain.

This sequence belongs to the NAD-dependent DNA ligase family. LigA subfamily. Requires Mg(2+) as cofactor. Mn(2+) is required as a cofactor.

The enzyme catalyses NAD(+) + (deoxyribonucleotide)n-3'-hydroxyl + 5'-phospho-(deoxyribonucleotide)m = (deoxyribonucleotide)n+m + AMP + beta-nicotinamide D-nucleotide.. Its function is as follows. DNA ligase that catalyzes the formation of phosphodiester linkages between 5'-phosphoryl and 3'-hydroxyl groups in double-stranded DNA using NAD as a coenzyme and as the energy source for the reaction. It is essential for DNA replication and repair of damaged DNA. This chain is DNA ligase, found in Borreliella burgdorferi (strain ATCC 35210 / DSM 4680 / CIP 102532 / B31) (Borrelia burgdorferi).